The chain runs to 571 residues: Potassium-transporting ATPase potassium-binding subunit (571 aa).

11 consecutive transmembrane segments (helical) span residues 5–25, 64–84, 136–156, 179–199, 254–274, 285–305, 330–350, 357–376, 421–441, 488–508, and 527–547; these read GWIQ…PLGS, LAYT…LYAI, GLTH…VALI, LYVL…QGIP, LSNL…TNVF, WAIL…TYWA, FGIA…CGAV, FTAL…EIII, MLGI…ATVV, LAIG…AIAG, and GGLF…LTFF.

This sequence belongs to the KdpA family. The system is composed of three essential subunits: KdpA, KdpB and KdpC.

It is found in the cell inner membrane. In terms of biological role, part of the high-affinity ATP-driven potassium transport (or Kdp) system, which catalyzes the hydrolysis of ATP coupled with the electrogenic transport of potassium into the cytoplasm. This subunit binds the periplasmic potassium ions and delivers the ions to the membrane domain of KdpB through an intramembrane tunnel. In Methylobacterium radiotolerans (strain ATCC 27329 / DSM 1819 / JCM 2831 / NBRC 15690 / NCIMB 10815 / 0-1), this protein is Potassium-transporting ATPase potassium-binding subunit.